The primary structure comprises 627 residues: (-)-alpha-terpineol synthase, chloroplastic (627 aa).

The N-terminal 52 residues, Met-1–Ser-52, are a transit peptide targeting the chloroplast. Mg(2+) is bound by residues Asp-378, Asp-382, and Asp-530. A DDXXD motif motif is present at residues Asp-378–Asp-382.

The protein belongs to the terpene synthase family. Tpsd subfamily. Mg(2+) is required as a cofactor. It depends on Mn(2+) as a cofactor.

The protein localises to the plastid. Its subcellular location is the chloroplast. It catalyses the reaction (2E)-geranyl diphosphate + H2O = (S)-alpha-terpineol + diphosphate. It participates in terpene metabolism; oleoresin biosynthesis. Functionally, involved in defensive oleoresin formation in conifers in response to insect attack or other injury. Involved in monoterpene (C10) olefins biosynthesis. Produces 57.3% alpha-terpineol (15.1% (+)/84.9% (-)), 27.6% limonene (25.2% (+)/74.8% (-)), 8% terpinolene, 4.7% beta-pinene (14.8% (+)/85.2% (-)), 1.3% alpha-pinene (100% (+)) and 1.1% myrcene. The chain is (-)-alpha-terpineol synthase, chloroplastic (PT10) from Pinus taeda (Loblolly pine).